A 79-amino-acid polypeptide reads, in one-letter code: DNA-directed RNA polymerase subunit omega (79 aa).

It belongs to the RNA polymerase subunit omega family. As to quaternary structure, the RNAP catalytic core consists of 2 alpha, 1 beta, 1 beta' and 1 omega subunit. When a sigma factor is associated with the core the holoenzyme is formed, which can initiate transcription.

The enzyme catalyses RNA(n) + a ribonucleoside 5'-triphosphate = RNA(n+1) + diphosphate. Functionally, promotes RNA polymerase assembly. Latches the N- and C-terminal regions of the beta' subunit thereby facilitating its interaction with the beta and alpha subunits. The polypeptide is DNA-directed RNA polymerase subunit omega (Bdellovibrio bacteriovorus (strain ATCC 15356 / DSM 50701 / NCIMB 9529 / HD100)).